The following is an 83-amino-acid chain: Cytochrome c oxidase subunit 7A2, mitochondrial (83 aa).

The N-terminal 23 residues, Met-1–His-23, are a transit peptide targeting the mitochondrion. The Mitochondrial matrix segment spans residues Phe-24–Gly-48. Lys-33 is subject to N6-acetyllysine. The helical transmembrane segment at Thr-49–Ala-77 threads the bilayer. Over Phe-78 to Asn-83 the chain is Mitochondrial intermembrane.

The protein belongs to the cytochrome c oxidase VIIa family. Component of the cytochrome c oxidase (complex IV, CIV), a multisubunit enzyme composed of 14 subunits. The complex is composed of a catalytic core of 3 subunits MT-CO1, MT-CO2 and MT-CO3, encoded in the mitochondrial DNA, and 11 supernumerary subunits COX4I, COX5A, COX5B, COX6A, COX6B, COX6C, COX7A, COX7B, COX7C, COX8 and NDUFA4, which are encoded in the nuclear genome. The complex exists as a monomer or a dimer and forms supercomplexes (SCs) in the inner mitochondrial membrane with NADH-ubiquinone oxidoreductase (complex I, CI) and ubiquinol-cytochrome c oxidoreductase (cytochrome b-c1 complex, complex III, CIII), resulting in different assemblies (supercomplex SCI(1)III(2)IV(1) and megacomplex MCI(2)III(2)IV(2)). Interacts with PET100.

Its subcellular location is the mitochondrion inner membrane. Its pathway is energy metabolism; oxidative phosphorylation. Its function is as follows. Component of the cytochrome c oxidase, the last enzyme in the mitochondrial electron transport chain which drives oxidative phosphorylation. The respiratory chain contains 3 multisubunit complexes succinate dehydrogenase (complex II, CII), ubiquinol-cytochrome c oxidoreductase (cytochrome b-c1 complex, complex III, CIII) and cytochrome c oxidase (complex IV, CIV), that cooperate to transfer electrons derived from NADH and succinate to molecular oxygen, creating an electrochemical gradient over the inner membrane that drives transmembrane transport and the ATP synthase. Cytochrome c oxidase is the component of the respiratory chain that catalyzes the reduction of oxygen to water. Electrons originating from reduced cytochrome c in the intermembrane space (IMS) are transferred via the dinuclear copper A center (CU(A)) of subunit 2 and heme A of subunit 1 to the active site in subunit 1, a binuclear center (BNC) formed by heme A3 and copper B (CU(B)). The BNC reduces molecular oxygen to 2 water molecules using 4 electrons from cytochrome c in the IMS and 4 protons from the mitochondrial matrix. The polypeptide is Cytochrome c oxidase subunit 7A2, mitochondrial (Cox7a2) (Rattus norvegicus (Rat)).